A 372-amino-acid polypeptide reads, in one-letter code: NAD(P)H-quinone oxidoreductase subunit 1 (372 aa).

A run of 8 helical transmembrane segments spans residues 27–47, 97–117, 128–148, 176–196, 204–224, 266–286, 308–328, and 347–367; these read IIWLPIPMLLVLVAAVVGVLV, ILFTAGPILVLVPVILSWLIV, VGIGIFLWIALSSIQPIGLLM, LALSVLAIVLMTNSLSTIDIV, ILSWNIWRQPVGFIVFWICAL, ILSALLVSILYLGGWGFPIPV, SIGIVMTVLKAYLLVFIAILL, and FLLPISLANLLITAGLKLAFP.

This sequence belongs to the complex I subunit 1 family. In terms of assembly, NDH-1 is composed of at least 11 different subunits.

Its subcellular location is the cellular thylakoid membrane. It catalyses the reaction a plastoquinone + NADH + (n+1) H(+)(in) = a plastoquinol + NAD(+) + n H(+)(out). It carries out the reaction a plastoquinone + NADPH + (n+1) H(+)(in) = a plastoquinol + NADP(+) + n H(+)(out). Its function is as follows. NDH-1 shuttles electrons from an unknown electron donor, via FMN and iron-sulfur (Fe-S) centers, to quinones in the respiratory and/or the photosynthetic chain. The immediate electron acceptor for the enzyme in this species is believed to be plastoquinone. Couples the redox reaction to proton translocation, and thus conserves the redox energy in a proton gradient. The polypeptide is NAD(P)H-quinone oxidoreductase subunit 1 (Prochlorococcus marinus (strain MIT 9312)).